We begin with the raw amino-acid sequence, 165 residues long: Peptidyl-prolyl cis-trans isomerase A (165 aa).

Methionine 1 is modified (N-acetylmethionine). Valine 2 is modified (N-acetylvaline; in Peptidyl-prolyl cis-trans isomerase A, N-terminally processed). The region spanning 7 to 163 (FFDIAVDGEP…KKITIADCGQ (157 aa)) is the PPIase cyclophilin-type domain. The residue at position 28 (lysine 28) is an N6-acetyllysine; alternate. A Glycyl lysine isopeptide (Lys-Gly) (interchain with G-Cter in SUMO2); alternate cross-link involves residue lysine 28. Lysine 28 is covalently cross-linked (Glycyl lysine isopeptide (Lys-Gly) (interchain with G-Cter in ubiquitin); alternate). Residues lysine 44 and lysine 76 each carry the N6-acetyllysine modification. A Phosphoserine modification is found at serine 77. N6-acetyllysine; alternate is present on lysine 82. Lysine 82 participates in a covalent cross-link: Glycyl lysine isopeptide (Lys-Gly) (interchain with G-Cter in SUMO2); alternate. A Phosphothreonine modification is found at threonine 93. Residue asparagine 108 is glycosylated (N-linked (GlcNAc...) asparagine). An N6-acetyllysine mark is found at lysine 125, lysine 131, and lysine 133.

It belongs to the cyclophilin-type PPIase family. PPIase A subfamily. In terms of assembly, interacts with protein phosphatase PPP3CA/calcineurin A. Interacts with isoform 2 of BSG/CD147. Interacts with FOXO1; the interaction promotes FOXO1 dephosphorylation, nuclear accumulation and transcriptional activity. Interacts with integrin ITGA2B:ITGB3; the interaction is ROS and peptidyl-prolyl cis-trans isomerase (PPIase) activity-dependent and is increased in the presence of thrombin. Interacts with MAP3K5. Interacts with TARDBP; the interaction is dependent on the RNA-binding activity of TARDBP and the PPIase activity of PPIA/CYPA and the acetylation of PPIA/CYPA at Lys-125 favors the interaction. Interacts with HNRNPA1, HNRNPA2B1, HNRNPC, RBMX, HNRNPK and HNRNPM. Acetylation at Lys-125 markedly inhibits catalysis of cis to trans isomerization. PPIA acetylation also antagonizes the immunosuppressive effects of cyclosporine by inhibiting the sequential steps of cyclosporine binding and calcineurin inhibition. Acetylation at Lys-125 favors the interaction with TARDBP.

The protein resides in the cytoplasm. It is found in the secreted. The protein localises to the nucleus. It carries out the reaction [protein]-peptidylproline (omega=180) = [protein]-peptidylproline (omega=0). Its activity is regulated as follows. Binds cyclosporin A (CsA). CsA mediates some of its effects via an inhibitory action on PPIase. Functionally, catalyzes the cis-trans isomerization of proline imidic peptide bonds in oligopeptides. Exerts a strong chemotactic effect on leukocytes partly through activation of one of its membrane receptors BSG/CD147, initiating a signaling cascade that culminates in MAPK/ERK activation. Activates endothelial cells (ECs) in a proinflammatory manner by stimulating activation of NF-kappa-B and ERK, JNK and p38 MAP-kinases and by inducing expression of adhesion molecules including SELE and VCAM1. Induces apoptosis in ECs by promoting the FOXO1-dependent expression of CCL2 and BCL2L11 which are involved in EC chemotaxis and apoptosis. In response to oxidative stress, initiates proapoptotic and antiapoptotic signaling in ECs via activation of NF-kappa-B and AKT1 and up-regulation of antiapoptotic protein BCL2. Negatively regulates MAP3K5/ASK1 kinase activity, autophosphorylation and oxidative stress-induced apoptosis mediated by MAP3K5/ASK1. Necessary for the assembly of TARDBP in heterogeneous nuclear ribonucleoprotein (hnRNP) complexes and regulates TARDBP binding to RNA UG repeats and TARDBP-dependent expression of HDAC6, ATG7 and VCP which are involved in clearance of protein aggregates. Plays an important role in platelet activation and aggregation. Regulates calcium mobilization and integrin ITGA2B:ITGB3 bidirectional signaling via increased ROS production as well as by facilitating the interaction between integrin and the cell cytoskeleton. Binds heparan sulfate glycosaminoglycans. This is Peptidyl-prolyl cis-trans isomerase A (PPIA) from Symphalangus syndactylus (Siamang).